We begin with the raw amino-acid sequence, 55 residues long: Photosystem II reaction center X protein (55 aa).

Residues 24-44 (IGSFLAAAALIVVPAASFLLW) traverse the membrane as a helical segment.

This sequence belongs to the PsbX family. Type 2 subfamily. As to quaternary structure, PSII consists of a core antenna complex that captures photons, and an electron transfer chain that converts photonic excitation into a charge separation. PSII forms dimeric complexes.

It localises to the cellular thylakoid membrane. In terms of biological role, involved in the binding and/or turnover of quinones at the Q(B) site of Photosystem II. This Prochlorococcus marinus (strain SARG / CCMP1375 / SS120) protein is Photosystem II reaction center X protein.